A 571-amino-acid chain; its full sequence is Quinone-dependent D-lactate dehydrogenase (571 aa).

Positions 44-273 (GGGPVFAVVR…FAVRTRTFPR (230 aa)) constitute an FAD-binding PCMH-type domain. FAD is bound by residues 78 to 82 (ASNTG), 86 to 87 (GS), G145, S152, G162, and V263.

This sequence belongs to the quinone-dependent D-lactate dehydrogenase family. FAD serves as cofactor.

Its subcellular location is the cell membrane. It catalyses the reaction (R)-lactate + a quinone = a quinol + pyruvate. Catalyzes the oxidation of D-lactate to pyruvate. Also has weak activity with L-lactate and DL-2-hydroxybutyrate. Electrons derived from D-lactate oxidation enter the electron transport chain. Essential for growth with D-lactate as sole carbon and energy source. This Corynebacterium glutamicum (strain ATCC 13032 / DSM 20300 / JCM 1318 / BCRC 11384 / CCUG 27702 / LMG 3730 / NBRC 12168 / NCIMB 10025 / NRRL B-2784 / 534) protein is Quinone-dependent D-lactate dehydrogenase.